Consider the following 418-residue polypeptide: Tryptophan synthase beta chain (418 aa).

Polar residues predominate over residues 1–18; sequence MTSTLPKASQPDPSSLQP. The interval 1-28 is disordered; that stretch reads MTSTLPKASQPDPSSLQPSARPGAHGRF. Lysine 111 is subject to N6-(pyridoxal phosphate)lysine.

It belongs to the TrpB family. Tetramer of two alpha and two beta chains. The cofactor is pyridoxal 5'-phosphate.

It carries out the reaction (1S,2R)-1-C-(indol-3-yl)glycerol 3-phosphate + L-serine = D-glyceraldehyde 3-phosphate + L-tryptophan + H2O. It participates in amino-acid biosynthesis; L-tryptophan biosynthesis; L-tryptophan from chorismate: step 5/5. Functionally, the beta subunit is responsible for the synthesis of L-tryptophan from indole and L-serine. The chain is Tryptophan synthase beta chain from Synechococcus sp. (strain CC9902).